An 87-amino-acid polypeptide reads, in one-letter code: Pro-gurmarin (87 aa).

The signal sequence occupies residues 1–20; the sequence is MAKFAAIVLLILVASATVNA. The propeptide occupies 21–52; sequence VKEHDELPTTGMSRKILLQPVFKSLIISIAEG. At glutamine 53 the chain carries Pyrrolidone carboxylic acid. 3 cysteine pairs are disulfide-bonded: cysteine 55-cysteine 70, cysteine 62-cysteine 75, and cysteine 69-cysteine 85.

Expressed in leaves (at protein level).

Functionally, peptide that strongly, but reversibly, suppresses the sweet taste-response to various sweeteners, including sugars, sweet amino acids and the artificial sweetener saccharin. In rodents, potentially binds to a sweet taste receptor present on apical microvilli of a subset of taste bud cells. Highly effective at blocking the sweet taste-response in rodents such as rats and mice, though mice may possess a mix of gurmarin-sensitive and -insensitive receptors. Has almost no effect on the sweet taste-response in humans. Inhibits Staphylococcus aureus biofilm formation without affecting bacterial viability. May be one of at least 9 different disulfide-rich peptides produced with varying properties. The chain is Pro-gurmarin from Gymnema sylvestre (Gurmar).